We begin with the raw amino-acid sequence, 230 residues long: UPF0173 metal-dependent hydrolase MM_2300 (230 aa).

The protein belongs to the UPF0173 family.

The protein is UPF0173 metal-dependent hydrolase MM_2300 of Methanosarcina mazei (strain ATCC BAA-159 / DSM 3647 / Goe1 / Go1 / JCM 11833 / OCM 88) (Methanosarcina frisia).